The following is a 182-amino-acid chain: Phospholipase A2 inhibitor gamma subunit A2 (182 aa).

8 cysteine pairs are disulfide-bonded: Cys-3/Cys-27, Cys-6/Cys-13, Cys-20/Cys-48, Cys-54/Cys-75, Cys-76/Cys-81, Cys-99/Cys-124, Cys-117/Cys-146, and Cys-150/Cys-172. N-linked (GlcNAc...) asparagine glycosylation occurs at Asn-157.

This sequence belongs to the CNF-like-inhibitor family. In terms of assembly, heterodimer of subunit A and subunit B.

The protein resides in the secreted. In terms of biological role, phospholipase A2 (PA2) inhibitor. Inhibits the enzymatic activity of PA2 of Deinagkistrodon acutus. Also shows a wide anti-hemorrhage activities to D.acutus, Naja atra and Agkistrodon halys venom. The native protein is more potent than the recombinant one. This is Phospholipase A2 inhibitor gamma subunit A2 from Trimerodytes annularis (Red-bellied annulate keelback).